Consider the following 84-residue polypeptide: Small ribosomal subunit protein bS20 (84 aa).

It belongs to the bacterial ribosomal protein bS20 family.

In terms of biological role, binds directly to 16S ribosomal RNA. The polypeptide is Small ribosomal subunit protein bS20 (Ligilactobacillus salivarius (strain UCC118) (Lactobacillus salivarius)).